A 358-amino-acid polypeptide reads, in one-letter code: Aminomethyltransferase (358 aa).

Belongs to the GcvT family. As to quaternary structure, the glycine cleavage system is composed of four proteins: P, T, L and H.

The enzyme catalyses N(6)-[(R)-S(8)-aminomethyldihydrolipoyl]-L-lysyl-[protein] + (6S)-5,6,7,8-tetrahydrofolate = N(6)-[(R)-dihydrolipoyl]-L-lysyl-[protein] + (6R)-5,10-methylene-5,6,7,8-tetrahydrofolate + NH4(+). The glycine cleavage system catalyzes the degradation of glycine. This chain is Aminomethyltransferase, found in Francisella tularensis subsp. tularensis (strain WY96-3418).